The sequence spans 159 residues: Large ribosomal subunit protein uL22c (159 aa).

This sequence belongs to the universal ribosomal protein uL22 family. Part of the 50S ribosomal subunit.

Its subcellular location is the plastid. It localises to the chloroplast. Functionally, this protein binds specifically to 23S rRNA. The globular domain of the protein is located near the polypeptide exit tunnel on the outside of the subunit, while an extended beta-hairpin is found that lines the wall of the exit tunnel in the center of the 70S ribosome. The sequence is that of Large ribosomal subunit protein uL22c (rpl22) from Ipomoea purpurea (Common morning glory).